A 126-amino-acid polypeptide reads, in one-letter code: uncharacterized protein (126 aa).

A disordered region spans residues 1 to 46 (MREEEAAAVVTVPQAGRDGEQPGPPAGLGCAAVRGEPGGGGPQESR).

It localises to the cytoplasm. The protein localises to the cytoskeleton. Its subcellular location is the cilium basal body. This is an uncharacterized protein from Bos taurus (Bovine).